The sequence spans 64 residues: Ribosome biogenesis protein Nop10 (64 aa).

Belongs to the NOP10 family.

Functionally, involved in ribosome biogenesis; more specifically in 18S rRNA pseudouridylation and in cleavage of pre-rRNA. This is Ribosome biogenesis protein Nop10 from Ignicoccus hospitalis (strain KIN4/I / DSM 18386 / JCM 14125).